The primary structure comprises 736 residues: Oxysterol-binding protein-related protein 9 (736 aa).

Residue A2 is modified to N-acetylalanine. Residues 2-99 (ASIMEGPLSK…WIHALEETIL (98 aa)) enclose the PH domain. The segment at 231 to 367 (KSEQRPSSLP…DRDDDAEAGS (137 aa)) is disordered. A compositionally biased stretch (low complexity) spans 253-290 (TPTPNSTGSGHSPPSSSLTSPSHVNLSPNTVPEFSYSS). S306, S324, S325, S326, and S329 each carry phosphoserine. Composition is skewed to polar residues over residues 314 to 329 (SSGS…SGNS) and 336 to 347 (TESLNSSLSNGT). A Phosphoserine modification is found at S611.

The protein belongs to the OSBP family. In terms of assembly, heterodimer with OSBPL11. Interacts with OSBPL10. As to expression, widely expressed.

It is found in the late endosome membrane. The protein localises to the golgi apparatus. Its subcellular location is the trans-Golgi network membrane. It carries out the reaction a 1,2-diacyl-sn-glycero-3-phospho-(1D-myo-inositol 4-phosphate)(out) + a 1,2-diacyl-sn-glycero-3-phospho-L-serine(in) = a 1,2-diacyl-sn-glycero-3-phospho-(1D-myo-inositol 4-phosphate)(in) + a 1,2-diacyl-sn-glycero-3-phospho-L-serine(out). Its function is as follows. Interacts with OSBPL11 to function as lipid transfer proteins. Together they form a heterodimer that localizes at the ER-trans-Golgi membrane contact sites, and exchanges phosphatidylserine (1,2-diacyl-sn-glycero-3-phospho-L-serine, PS) for phosphatidylinositol-4-phosphate (1,2-diacyl-sn-glycero-3-phospho-(1D-myo-inositol 4-phosphate), PI(4)P) between the two organelles, a step that is critical for sphingomyelin synthesis in the Golgi complex. The protein is Oxysterol-binding protein-related protein 9 (OSBPL9) of Homo sapiens (Human).